A 165-amino-acid polypeptide reads, in one-letter code: Ribosome maturation factor RimM (165 aa).

In terms of domain architecture, PRC barrel spans 89 to 161; sequence EADTHYVVDL…KIVIKPVRQW (73 aa).

Belongs to the RimM family. As to quaternary structure, binds ribosomal protein uS19.

The protein localises to the cytoplasm. Functionally, an accessory protein needed during the final step in the assembly of 30S ribosomal subunit, possibly for assembly of the head region. Essential for efficient processing of 16S rRNA. May be needed both before and after RbfA during the maturation of 16S rRNA. It has affinity for free ribosomal 30S subunits but not for 70S ribosomes. This is Ribosome maturation factor RimM from Clostridium botulinum (strain Eklund 17B / Type B).